Reading from the N-terminus, the 254-residue chain is Phytolongin Phyl1.1 (254 aa).

A Longin domain is found at 12-113; sequence CVSRDNQILY…TAMIGSINVE (102 aa). Residues 138-173 are disordered; the sequence is ELKSSNLGEQSEGSNSTKAPLLGRLSKQEKKKGKDH. Residues 145 to 155 are compositionally biased toward polar residues; it reads GEQSEGSNSTK. The helical; Anchor for type IV membrane protein transmembrane segment at 226-246 threads the bilayer; the sequence is IVLAIDAAICLTLFGIWLAIC.

The protein belongs to the synaptobrevin family.

The protein resides in the membrane. Its function is as follows. Non-SNARE longin protein involved in membrane-trafficking machinery. The chain is Phytolongin Phyl1.1 from Arabidopsis thaliana (Mouse-ear cress).